Consider the following 505-residue polypeptide: Kinesin light chain 3 (505 aa).

A disordered region spans residues methionine 1–proline 20. Positions leucine 88–leucine 150 form a coiled coil. Residues aspartate 157–alanine 193 form a disordered region. Serine 173 carries the post-translational modification Phosphoserine. TPR repeat units follow at residues leucine 207–serine 240, alanine 249–threonine 282, alanine 291–valine 324, alanine 333–leucine 366, and alanine 375–proline 408. The interval alanine 409–arginine 505 is disordered. Residues threonine 416 to serine 434 are compositionally biased toward low complexity. Basic and acidic residues predominate over residues lysine 435 to glycine 453. Serine 467 is modified (phosphoserine). Over residues serine 489–arginine 505 the composition is skewed to polar residues. Phosphothreonine is present on threonine 499.

The protein belongs to the kinesin light chain family. Oligomer composed of two heavy chains and two light chains. Associates with microtubulin in an ATP-dependent manner. Interacts with KIF5C. Interacts with ODF1. Interacts with LRGUK. Interacts with VDAC2.

The protein localises to the cytoplasm. Its subcellular location is the cytoskeleton. The protein resides in the mitochondrion. Functionally, kinesin is a microtubule-associated force-producing protein that may play a role in organelle transport. Plays a role during spermiogenesis in the development of the sperm tail midpiece and in the normal function of spermatozoa. May play a role in the formation of the mitochondrial sheath formation in the developing spermatid midpiece. The polypeptide is Kinesin light chain 3 (KLC3) (Bos taurus (Bovine)).